Here is a 476-residue protein sequence, read N- to C-terminus: Ribulose bisphosphate carboxylase large chain (476 aa).

The substrate site is built by asparagine 124 and threonine 174. Catalysis depends on lysine 176, which acts as the Proton acceptor. Residue lysine 178 participates in substrate binding. Residues lysine 202, aspartate 204, and glutamate 205 each coordinate Mg(2+). Lysine 202 carries the N6-carboxylysine modification. The Proton acceptor role is filled by histidine 295. Residues arginine 296, histidine 328, and serine 380 each coordinate substrate.

Belongs to the RuBisCO large chain family. Type I subfamily. As to quaternary structure, heterohexadecamer of 8 large chains and 8 small chains; disulfide-linked. The disulfide link is formed within the large subunit homodimers. Mg(2+) serves as cofactor. In terms of processing, the disulfide bond which can form in the large chain dimeric partners within the hexadecamer appears to be associated with oxidative stress and protein turnover.

The protein localises to the carboxysome. The enzyme catalyses 2 (2R)-3-phosphoglycerate + 2 H(+) = D-ribulose 1,5-bisphosphate + CO2 + H2O. It carries out the reaction D-ribulose 1,5-bisphosphate + O2 = 2-phosphoglycolate + (2R)-3-phosphoglycerate + 2 H(+). RuBisCO catalyzes two reactions: the carboxylation of D-ribulose 1,5-bisphosphate, the primary event in carbon dioxide fixation, as well as the oxidative fragmentation of the pentose substrate in the photorespiration process. Both reactions occur simultaneously and in competition at the same active site. In Trichormus variabilis (strain ATCC 29413 / PCC 7937) (Anabaena variabilis), this protein is Ribulose bisphosphate carboxylase large chain.